Reading from the N-terminus, the 447-residue chain is ATP-dependent 6-phosphofructokinase (447 aa).

ATP contacts are provided by residues Gly-88, 154-155 (RG), and 179-182 (GDGT). Position 180 (Asp-180) interacts with Mg(2+). Substrate contacts are provided by residues 208-210 (TVD), 253-255 (MGR), Glu-315, and 368-371 (YIIR). Catalysis depends on Asp-210, which acts as the Proton acceptor.

The protein belongs to the phosphofructokinase type A (PFKA) family. PPi-dependent PFK group II subfamily. Atypical ATP-dependent clade 'X' sub-subfamily. As to quaternary structure, homodimer. Requires Mg(2+) as cofactor.

The protein localises to the cytoplasm. The catalysed reaction is beta-D-fructose 6-phosphate + ATP = beta-D-fructose 1,6-bisphosphate + ADP + H(+). The protein operates within carbohydrate degradation; glycolysis; D-glyceraldehyde 3-phosphate and glycerone phosphate from D-glucose: step 3/4. In terms of biological role, catalyzes the phosphorylation of D-fructose 6-phosphate to fructose 1,6-bisphosphate by ATP, the first committing step of glycolysis. This chain is ATP-dependent 6-phosphofructokinase, found in Borreliella burgdorferi (strain ATCC 35210 / DSM 4680 / CIP 102532 / B31) (Borrelia burgdorferi).